The chain runs to 618 residues: 1-deoxy-D-xylulose-5-phosphate synthase (618 aa).

Thiamine diphosphate-binding positions include histidine 76 and 117–119; that span reads GHS. Aspartate 148 lines the Mg(2+) pocket. Residues 149–150, asparagine 177, tyrosine 284, and glutamate 364 contribute to the thiamine diphosphate site; that span reads GA. Asparagine 177 contributes to the Mg(2+) binding site.

This sequence belongs to the transketolase family. DXPS subfamily. Homodimer. Mg(2+) serves as cofactor. Thiamine diphosphate is required as a cofactor.

It catalyses the reaction D-glyceraldehyde 3-phosphate + pyruvate + H(+) = 1-deoxy-D-xylulose 5-phosphate + CO2. Its pathway is metabolic intermediate biosynthesis; 1-deoxy-D-xylulose 5-phosphate biosynthesis; 1-deoxy-D-xylulose 5-phosphate from D-glyceraldehyde 3-phosphate and pyruvate: step 1/1. Catalyzes the acyloin condensation reaction between C atoms 2 and 3 of pyruvate and glyceraldehyde 3-phosphate to yield 1-deoxy-D-xylulose-5-phosphate (DXP). This Francisella philomiragia subsp. philomiragia (strain ATCC 25017 / CCUG 19701 / FSC 153 / O#319-036) protein is 1-deoxy-D-xylulose-5-phosphate synthase.